A 301-amino-acid chain; its full sequence is 2-phosphoglycerate kinase (301 aa).

One can recognise an ATP-cone domain in the interval 2 to 89 (IRVIEKGDKV…FWRRFRKMKV (88 aa)).

This sequence belongs to the 2-phosphoglycerate kinase family. A divalent metal cation serves as cofactor.

It carries out the reaction (2R)-2-phosphoglycerate + ATP = (2R)-2,3-bisphosphoglycerate + ADP + H(+). It functions in the pathway thermoadapter biosynthesis; cyclic 2,3-diphosphoglycerate biosynthesis; cyclic 2,3-diphosphoglycerate from 2-phospho-D-glycerate: step 1/2. Functionally, catalyzes the phosphorylation of 2-phosphoglycerate to 2,3-diphosphoglycerate. Involved in the biosynthesis of cyclic 2,3-bisphosphoglycerate, a thermoprotectant. The polypeptide is 2-phosphoglycerate kinase (Pyrococcus horikoshii (strain ATCC 700860 / DSM 12428 / JCM 9974 / NBRC 100139 / OT-3)).